Reading from the N-terminus, the 122-residue chain is Small ribosomal subunit protein uS13 (122 aa).

The interval 97–122 (PVRGQRTHTNARTRKGPAKAIAGKKK) is disordered.

The protein belongs to the universal ribosomal protein uS13 family. As to quaternary structure, part of the 30S ribosomal subunit. Forms a loose heterodimer with protein S19. Forms two bridges to the 50S subunit in the 70S ribosome.

Located at the top of the head of the 30S subunit, it contacts several helices of the 16S rRNA. In the 70S ribosome it contacts the 23S rRNA (bridge B1a) and protein L5 of the 50S subunit (bridge B1b), connecting the 2 subunits; these bridges are implicated in subunit movement. Contacts the tRNAs in the A and P-sites. The polypeptide is Small ribosomal subunit protein uS13 (Brucella abortus (strain S19)).